The sequence spans 377 residues: Probable G-protein coupled receptor 27 (377 aa).

Topologically, residues 1-24 (MANASEPGGGGGGAEAAALGLRLA) are extracellular. N-linked (GlcNAc...) asparagine glycosylation occurs at Asn-3. Residues 25-45 (TLSLLLCVSLAGNVLFALLIV) form a helical membrane-spanning segment. Residues 46–56 (RERSLHRAPYY) are Cytoplasmic-facing. The helical transmembrane segment at 57 to 77 (LLLDLCLADGLRALACLPAVM) threads the bilayer. Over 78–98 (LAARRAAAAAGTPPGALGCKL) the chain is Extracellular. Cysteines 96 and 173 form a disulfide. The chain crosses the membrane as a helical span at residues 99–119 (LAFLAALFCFHAAFLLLGVGV). At 120-140 (TRYLAIAHHRFYAERLAGWPC) the chain is on the cytoplasmic side. The helical transmembrane segment at 141–161 (AAMLVCAAWALALAAAFPPVL) threads the bilayer. At 162–183 (DGGGADDEDAPCALEQRPDGAP) the chain is on the extracellular side. The helical transmembrane segment at 184 to 204 (GALGFLLLLAAVVGATHLVYL) threads the bilayer. Residues 205-287 (RLLFFIHDRR…FKTEKRLCKM (83 aa)) lie on the Cytoplasmic side of the membrane. Residues 288-308 (FYAITLLFLLLWGPYVVASYL) form a helical membrane-spanning segment. At 309–322 (RVLVRPGAVPQAYL) the chain is on the extracellular side. A helical membrane pass occupies residues 323 to 343 (TASVWLTFAQAGINPVVCFLF). At 344–377 (NRELRDCFRAQFPCCQSPQATQATLPCDLKGIGL) the chain is on the cytoplasmic side.

This sequence belongs to the G-protein coupled receptor 1 family. Expressed as a 3.0 kb transcript, in whole brain, hippocampus, striatum, frontal cortex, thalamus, pons and hypothalamus. A lower molecular weight transcript was detected in all regions examined, except the hypothalamus.

It is found in the cell membrane. Its function is as follows. Orphan receptor. Possible candidate for amine-like G-protein coupled receptor. This Rattus norvegicus (Rat) protein is Probable G-protein coupled receptor 27 (Gpr27).